Reading from the N-terminus, the 322-residue chain is Retinal homeobox protein Rx-A (322 aa).

The Octapeptide motif motif lies at 32–39; it reads HSIEAILG. Over residues 75–87 the composition is skewed to basic and acidic residues; it reads TEEIHPQQEHLED. The disordered stretch occupies residues 75–136; the sequence is TEEIHPQQEH…KKKHRRNRTT (62 aa). Polar residues predominate over residues 100–117; the sequence is KTSSECLSPGLSTSNSDN. A DNA-binding region (homeobox) is located at residues 130–189; the sequence is HRRNRTTFTTYQLHELERAFEKSHYPDVYSREELAMKVNLPEVRVQVWFQNRRAKWRRQE. An OAR motif is present at residues 302 to 315; that stretch reads NSIASLRMKAKEHI. Positions 308–312 match the Nuclear localization signal motif; it reads RMKAK.

This sequence belongs to the paired homeobox family. Bicoid subfamily. Highly expressed in anterior neural plate followed by neural retina, pigmented epithelium, in pineal gland, diencephalon floor and epiphysis. At later stages, the neuroretina remains the primary site of expression. No expression in the developing lens and cornea.

It is found in the nucleus. Plays a critical role in eye formation by regulating the initial specification of retinal cells and/or their subsequent proliferation. This Xenopus laevis (African clawed frog) protein is Retinal homeobox protein Rx-A (rax-a).